Here is a 1887-residue protein sequence, read N- to C-terminus: Protein TIC 214 (1887 aa).

Helical transmembrane passes span 18–38 (IINS…FSIG), 64–84 (FITG…HLAL), 87–107 (PHTI…WNNH), 124–144 (LSIQ…HFIL), 172–192 (VGWL…LVWI), and 221–241 (IFSI…PSPI). 3 disordered regions span residues 248 to 300 (EASK…EGWD), 786 to 805 (EEQT…DNKR), and 1569 to 1603 (LPSN…NLSP). Acidic residues predominate over residues 256–268 (VESEEERDVEIET). Residues 775-816 (KEREFKILESREEQTKREEKKEKDKKEDNKRKEQARIAIEEA) are a coiled coil. Residues 1578 to 1597 (RSQETKEPPSQRERGSDIEN) show a composition bias toward basic and acidic residues.

Belongs to the TIC214 family. In terms of assembly, part of the Tic complex.

It localises to the plastid. Its subcellular location is the chloroplast inner membrane. Its function is as follows. Involved in protein precursor import into chloroplasts. May be part of an intermediate translocation complex acting as a protein-conducting channel at the inner envelope. The protein is Protein TIC 214 of Solanum bulbocastanum (Wild potato).